We begin with the raw amino-acid sequence, 285 residues long: Protein unc-1 (285 aa).

Helical transmembrane passes span 27-47 (IGTI…IVTF) and 69-89 (IGRL…IPCI).

Belongs to the band 7/mec-2 family.

Its subcellular location is the cell membrane. It localises to the cell junction. It is found in the gap junction. This chain is Protein unc-1 (unc-1), found in Caenorhabditis elegans.